The primary structure comprises 397 residues: uncharacterized protein (397 aa).

This is an uncharacterized protein from Methanocaldococcus jannaschii (strain ATCC 43067 / DSM 2661 / JAL-1 / JCM 10045 / NBRC 100440) (Methanococcus jannaschii).